The following is a 125-amino-acid chain: MARVKRGVTSHAKHKKVLKAAKGYYGRRKNTIRIAKQAVEKGMQYAYRDRKNKKRTFRALWIQRLNAAVREHGLTYSRFIDGLAKSGIVVDRKALSELAIHEPASFAAVVEKAKAALPQNTAKAA.

The protein belongs to the bacterial ribosomal protein bL20 family.

Binds directly to 23S ribosomal RNA and is necessary for the in vitro assembly process of the 50S ribosomal subunit. It is not involved in the protein synthesizing functions of that subunit. The chain is Large ribosomal subunit protein bL20 from Methylobacterium radiotolerans (strain ATCC 27329 / DSM 1819 / JCM 2831 / NBRC 15690 / NCIMB 10815 / 0-1).